The following is a 91-amino-acid chain: MKLAITLALVTLALLCSPASAGICPRFAHVIENLLLGTPSSYETSLKEFEPDDTMKDAGMQMKKVLDSLPQTTRENIMKLTEKIVKSPLCM.

A signal peptide spans 1 to 21; sequence MKLAITLALVTLALLCSPASA.

Belongs to the secretoglobin family. Antiparallel homodimer; disulfide-linked. Interaction with LMBR1L is controversial. Synthesized in the uterus and lung.

Its subcellular location is the secreted. Functionally, uteroglobin binds progesterone specifically and with high affinity. It may regulate progesterone concentrations reaching the blastocyst. It is also a potent inhibitor of phospholipase A2. This Oryctolagus cuniculus (Rabbit) protein is Uteroglobin (SCGB1A1).